Consider the following 369-residue polypeptide: Flagellar P-ring protein (369 aa).

The signal sequence occupies residues 1-22; sequence MFNVRQLIATTLLLSCAFAAQA.

The protein belongs to the FlgI family. In terms of assembly, the basal body constitutes a major portion of the flagellar organelle and consists of four rings (L,P,S, and M) mounted on a central rod.

The protein localises to the periplasm. It is found in the bacterial flagellum basal body. Its function is as follows. Assembles around the rod to form the L-ring and probably protects the motor/basal body from shearing forces during rotation. In Pseudomonas putida (strain ATCC 47054 / DSM 6125 / CFBP 8728 / NCIMB 11950 / KT2440), this protein is Flagellar P-ring protein.